An 809-amino-acid chain; its full sequence is Plasminogen (809 aa).

Positions 1-19 (MDHKEVVLLLLLFLKSGLG) are cleaved as a signal peptide. The 79-residue stretch at 20–98 (DSLDDYVNTQ…RDVVLFEKRI (79 aa)) folds into the PAN domain. 24 disulfides stabilise this stretch: C49/C73, C53/C61, C103/C181, C124/C164, C152/C176, C185/C262, C188/C316, C206/C245, C234/C257, C275/C352, C296/C335, C324/C347, C377/C454, C398/C437, C426/C449, C480/C559, C501/C542, C530/C554, C566/C684, C576/C584, C606/C622, C698/C765, C728/C744, and C755/C783. Kringle domains lie at 103–181 (CKTG…IPEC) and 185–262 (CMHC…IPRC). T268 carries O-linked (GalNAc...) threonine glycosylation. 3 consecutive Kringle domains span residues 275–352 (CLKG…IPSC), 377–454 (CYRG…LKKC), and 480–559 (CMFG…VPQC). An N-linked (GlcNAc...) asparagine glycan is attached at N308. Positions 580-807 (VVGGCVSIPH…FVTWIEEIMR (228 aa)) constitute a Peptidase S1 domain. S596 is subject to Phosphoserine. Catalysis depends on charge relay system residues H621 and D664. Residue S759 is the Charge relay system of the active site.

This sequence belongs to the peptidase S1 family. Plasminogen subfamily. As to quaternary structure, interacts with CSPG4 and AMOT. Interacts (via the Kringle domains) with HRG; the interaction tethers PLG to the cell surface and enhances its activation. Interacts (via Kringle 4 domain) with ADA; the interaction stimulates PLG activation when in complex with DPP4. Angiostatin: Interacts with ATP5F1A; the interaction inhibits most of the angiogenic effects of angiostatin. N-linked glycan contains N-acetyllactosamine, sialic acid and is core fucosylated. O-linked glycans consist of Gal-GalNAc disaccharide which is modified with up to 2 sialic acid residues (microheterogeneity). In terms of processing, in the presence of the inhibitor, the activation involves only cleavage after Arg-579, yielding two chains held together by two disulfide bonds. In the absence of the inhibitor, the activation involves additionally the removal of the activation peptide.

The protein resides in the secreted. The catalysed reaction is Preferential cleavage: Lys-|-Xaa &gt; Arg-|-Xaa, higher selectivity than trypsin. Converts fibrin into soluble products.. With respect to regulation, converted into plasmin by plasminogen activators, both plasminogen and its activator being bound to fibrin. Cannot be activated with streptokinase. Plasmin dissolves the fibrin of blood clots and acts as a proteolytic factor in a variety of other processes including embryonic development, tissue remodeling, tumor invasion, and inflammation. In ovulation, weakens the walls of the Graafian follicle. It activates the urokinase-type plasminogen activator, collagenases and several complement zymogens, such as C1, C4 and C5. Cleavage of fibronectin and laminin leads to cell detachment and apoptosis. Also cleaves fibrin, thrombospondin and von Willebrand factor. Its role in tissue remodeling and tumor invasion may be modulated by CSPG4. Binds to cells. The chain is Plasminogen (PLG) from Sus scrofa (Pig).